Here is a 449-residue protein sequence, read N- to C-terminus: UNC93-like protein MFSD11 (449 aa).

Residues 8–28 traverse the membrane as a helical segment; the sequence is LFNIIILGVAFMFMFTAFQTC. N40 is a glycosylation site (N-linked (GlcNAc...) asparagine). 5 consecutive transmembrane segments (helical) span residues 53–73, 74–94, 96–116, 138–158, and 170–190; these read AIIYGVFSASNLITPPVVAIV, GPQLSMFASGLFYSMYIAVFN, PFPWSFYTASVFIGIAAAVLW, IFWALLQSSLFFGNLYVYFAW, and RTVFIALTVISLVGTVLFFLI. S204 is subject to Phosphoserine. The next 6 membrane-spanning stretches (helical) occupy residues 239-259, 277-297, 309-329, 359-379, 385-405, and 410-430; these read MLLLSITTAYTGLELTFFSGV, LIGLSGIFIGIGEILGGSLFG, PVVLLGILVHFIAFYLIFLNM, FLLGLGDSCFNTQLLSILGFL, APAFAIFKFVQSICAAVAFFY, and LLHWQLLVMVIFGFFGTLSFF.

It belongs to the unc-93 family.

It localises to the membrane. This Pongo abelii (Sumatran orangutan) protein is UNC93-like protein MFSD11 (MFSD11).